A 269-amino-acid chain; its full sequence is Shikimate dehydrogenase (NADP(+)) (269 aa).

Residues 17 to 19 (SKS) and threonine 64 contribute to the shikimate site. Catalysis depends on lysine 68, which acts as the Proton acceptor. Position 80 (glutamate 80) interacts with NADP(+). Residues asparagine 89 and aspartate 105 each contribute to the shikimate site. NADP(+) is bound by residues 130-134 (GAGGA), 154-159 (NRTHAK), and methionine 213. Tyrosine 215 lines the shikimate pocket. Glycine 237 lines the NADP(+) pocket.

The protein belongs to the shikimate dehydrogenase family. As to quaternary structure, homodimer.

The enzyme catalyses shikimate + NADP(+) = 3-dehydroshikimate + NADPH + H(+). It functions in the pathway metabolic intermediate biosynthesis; chorismate biosynthesis; chorismate from D-erythrose 4-phosphate and phosphoenolpyruvate: step 4/7. Its function is as follows. Involved in the biosynthesis of the chorismate, which leads to the biosynthesis of aromatic amino acids. Catalyzes the reversible NADPH linked reduction of 3-dehydroshikimate (DHSA) to yield shikimate (SA). The sequence is that of Shikimate dehydrogenase (NADP(+)) from Neisseria pharyngis.